Here is a 246-residue protein sequence, read N- to C-terminus: DNA repair protein RecO (246 aa).

This sequence belongs to the RecO family.

Functionally, involved in DNA repair and RecF pathway recombination. The protein is DNA repair protein RecO of Methylorubrum populi (strain ATCC BAA-705 / NCIMB 13946 / BJ001) (Methylobacterium populi).